The following is a 443-amino-acid chain: Autophagy-related protein 13 homolog (443 aa).

2 disordered regions span residues 232–283 (AKKR…EEDH) and 308–333 (ANGT…KEPT). A compositionally biased stretch (polar residues) spans 240 to 253 (SVESATSAGSSTSR). The span at 268 to 283 (EDSRHSDVQNSYEEDH) shows a compositional bias: basic and acidic residues. A compositionally biased stretch (polar residues) spans 308–325 (ANGTKKNSSSTCLNSPKS).

The protein belongs to the ATG13 family. Metazoan subfamily. As to quaternary structure, interacts with unc-51 (via C-terminus). Interacts with lgg-1; the interaction is direct.

The protein localises to the cytoplasm. It is found in the cytosol. The protein resides in the preautophagosomal structure. It localises to the perikaryon. Its subcellular location is the cell projection. The protein localises to the axon. Component of the unc-51/atg-13 complex required for autophagosome formation. Required for the degradation of germ cell specific P-granule components such as sepa-1 by autophagy in somatic cells. This ensures exclusive localization of the P-granules in germ cells. May function downstream of the let-363 (Tor) signaling pathway to mediate sepa-1 degradation. Plays a role in survival during limited food availability. The polypeptide is Autophagy-related protein 13 homolog (Caenorhabditis elegans).